Here is an 880-residue protein sequence, read N- to C-terminus: MQLSGFSTNGSGSLNTIVCEKLLFKPNFVQDSFIIGMTILCSVILYGSGNLRYIDALLLASGSCTQTGLQPVDLTQISIYQQLTILLFGVLSTPITVNLGLTLFKLYFYNKRYDMVITNNKLRMTYTYHTVRRRDTPEPSKVGNRKIRVLLDQGNQMHRPVAPETKAEEAEHQENEKHHRHHFRLRKFANAIDRPSFFRGNTMPALPSYAGVRNSQENEDRTEALSPALGKRRMASIDNGSLSVVQNNARNNPVDFYIPSSFEESSFQTIPEDFEPQVHDHENQTQLNHHLDNNSSISSHNPSLETANDGNQETVSSSNSNYSTTRVDNDPHVASYSPQNSNFDHQAAATTNDAHQNVVRGSAITIAPTPVPRHNRRPIYFADDTNGAEQEKGAHRLDGRGRKRGKSFAVTPTLHRNERSMSVLPFQLAKSFTSALPRRLTFNRTHTKASTMSLPYLSYNATVGRNSAFYALTPVEREELAGIEYESLRILTVILVVYFLFWHILGLVAFLIFIYTAKTSGRVVTDGGINRGWWAAFTSSSLFDNLGYSLNSDSLNSFQKAIFPQVLGTILIFLGNTFFPIMLRFIIWIMIRTTRFSPNFQQALYFLFEHPRRSFTLLFPSKTTWVLFLNLTLLNFASFFFFMVLDLGNSYVDKIPVGYRIMNAIFQNAATRSAGFTVVDLSQIAPAVMVTYMFMMYISAYPIAMSIRQTNVYEERSLGIYAADTENDDDNNINNNNNDNNTPKRKNFLMDHIQRQLSHDLWYLFLGYFIITIVEGRRLESEAEPQFTLFAILFEVISGYGTVGLSLGYKNDPSLTAQFRKISKLVMVALQIRGRHRGLPSALDRAVLMPSDKNFDREEEDYMRRHGKKNTNRADPVPSS.

N-linked (GlcNAc...) asparagine glycosylation occurs at Asn9. Transmembrane regions (helical) follow at residues 28 to 48 (FVQD…LYGS) and 84 to 104 (TILL…LTLF). Positions 157 to 182 (MHRPVAPETKAEEAEHQENEKHHRHH) are disordered. Residues 165 to 177 (TKAEEAEHQENEK) show a composition bias toward basic and acidic residues. Residues Asn239, Asn283, Asn293, Asn294, Asn321, Asn443, and Asn460 are each glycosylated (N-linked (GlcNAc...) asparagine). Positions 289 to 315 (HHLDNNSSISSHNPSLETANDGNQETV) are enriched in polar residues. The disordered stretch occupies residues 289-344 (HHLDNNSSISSHNPSLETANDGNQETVSSSNSNYSTTRVDNDPHVASYSPQNSNFD). Residues 316-325 (SSSNSNYSTT) are compositionally biased toward low complexity. The next 6 helical transmembrane spans lie at 494-514 (ILVV…LIFI), 571-591 (LIFL…WIMI), 625-645 (WVLF…FMVL), 684-704 (IAPA…YPIA), 756-776 (QLSH…IVEG), and 787-807 (FTLF…GLSL). The tract at residues 857-880 (REEEDYMRRHGKKNTNRADPVPSS) is disordered.

It belongs to the TrkH potassium transport family.

The protein resides in the cell membrane. Its function is as follows. Together with TRK1, defines the major, high-affinity potassium influx transport system. Involved in maintenance of the proper sodium/potassium ratio in the cell and in regulating the plasma membrane potential. The protein is Potassium transport protein 2 (trk2) of Schizosaccharomyces pombe (strain 972 / ATCC 24843) (Fission yeast).